Here is a 524-residue protein sequence, read N- to C-terminus: Nif-specific regulatory protein (524 aa).

The interval 1 to 182 (MIHKSDSDTT…AQTIRLMILP (182 aa)) is a domain. Positions 35–176 (EASKTLQEVL…TVANLIAQTI (142 aa)) constitute a GAF domain. Positions 212–481 (MVGKSPAMRQ…DGWLDNSLDE (270 aa)) constitute a Sigma-54 factor interaction domain. ATP contacts are provided by residues 240-247 (GESGTGKE) and 303-312 (ADGGTLFLDE). Positions 482 to 524 (RQRLIAALEKAGWVQAKAARLLGMTPRQVAYRIQIMDITMPRL) are C-terminal DNA-binding domain. Positions 496–515 (QAKAARLLGMTPRQVAYRIQ) form a DNA-binding region, H-T-H motif.

As to quaternary structure, interacts with sigma-54.

In terms of biological role, required for activation of most nif operons, which are directly involved in nitrogen fixation. The sequence is that of Nif-specific regulatory protein (nifA) from Klebsiella pneumoniae.